We begin with the raw amino-acid sequence, 289 residues long: 4-diphosphocytidyl-2-C-methyl-D-erythritol kinase (289 aa).

Lysine 11 is an active-site residue. 93 to 103 (PLAAGLAGGSA) is an ATP binding site. The active site involves aspartate 135.

It belongs to the GHMP kinase family. IspE subfamily.

It catalyses the reaction 4-CDP-2-C-methyl-D-erythritol + ATP = 4-CDP-2-C-methyl-D-erythritol 2-phosphate + ADP + H(+). It functions in the pathway isoprenoid biosynthesis; isopentenyl diphosphate biosynthesis via DXP pathway; isopentenyl diphosphate from 1-deoxy-D-xylulose 5-phosphate: step 3/6. Its function is as follows. Catalyzes the phosphorylation of the position 2 hydroxy group of 4-diphosphocytidyl-2C-methyl-D-erythritol. The sequence is that of 4-diphosphocytidyl-2-C-methyl-D-erythritol kinase from Thermoanaerobacter pseudethanolicus (strain ATCC 33223 / 39E) (Clostridium thermohydrosulfuricum).